The following is a 176-amino-acid chain: NAD(P)H-quinone oxidoreductase subunit J (176 aa).

The protein belongs to the complex I 30 kDa subunit family. NDH-1 can be composed of about 15 different subunits; different subcomplexes with different compositions have been identified which probably have different functions.

Its subcellular location is the cellular thylakoid membrane. It carries out the reaction a plastoquinone + NADH + (n+1) H(+)(in) = a plastoquinol + NAD(+) + n H(+)(out). The enzyme catalyses a plastoquinone + NADPH + (n+1) H(+)(in) = a plastoquinol + NADP(+) + n H(+)(out). NDH-1 shuttles electrons from an unknown electron donor, via FMN and iron-sulfur (Fe-S) centers, to quinones in the respiratory and/or the photosynthetic chain. The immediate electron acceptor for the enzyme in this species is believed to be plastoquinone. Couples the redox reaction to proton translocation, and thus conserves the redox energy in a proton gradient. Cyanobacterial NDH-1 also plays a role in inorganic carbon-concentration. This chain is NAD(P)H-quinone oxidoreductase subunit J, found in Prochlorococcus marinus subsp. pastoris (strain CCMP1986 / NIES-2087 / MED4).